Here is a 104-residue protein sequence, read N- to C-terminus: L-rhamnose mutarotase (104 aa).

Tyr18 is a substrate binding site. His22 functions as the Proton donor in the catalytic mechanism. Substrate contacts are provided by residues Tyr41 and 76 to 77; that span reads WW.

It belongs to the rhamnose mutarotase family. Homodimer.

The protein localises to the cytoplasm. It carries out the reaction alpha-L-rhamnose = beta-L-rhamnose. Its pathway is carbohydrate metabolism; L-rhamnose metabolism. Functionally, involved in the anomeric conversion of L-rhamnose. The polypeptide is L-rhamnose mutarotase (Mannheimia succiniciproducens (strain KCTC 0769BP / MBEL55E)).